A 105-amino-acid polypeptide reads, in one-letter code: DNA-directed RNA polymerase subunit omega (105 aa).

Belongs to the RNA polymerase subunit omega family. The RNAP catalytic core consists of 2 alpha, 1 beta, 1 beta' and 1 omega subunit. When a sigma factor is associated with the core the holoenzyme is formed, which can initiate transcription.

The enzyme catalyses RNA(n) + a ribonucleoside 5'-triphosphate = RNA(n+1) + diphosphate. In terms of biological role, promotes RNA polymerase assembly. Latches the N- and C-terminal regions of the beta' subunit thereby facilitating its interaction with the beta and alpha subunits. In Streptococcus equi subsp. equi (strain 4047), this protein is DNA-directed RNA polymerase subunit omega.